We begin with the raw amino-acid sequence, 190 residues long: Threonylcarbamoyl-AMP synthase (190 aa).

One can recognise a YrdC-like domain in the interval 7-190 (SQDVASLVIA…ALSGELIRQG (184 aa)).

This sequence belongs to the SUA5 family. TsaC subfamily.

Its subcellular location is the cytoplasm. The catalysed reaction is L-threonine + hydrogencarbonate + ATP = L-threonylcarbamoyladenylate + diphosphate + H2O. In terms of biological role, required for the formation of a threonylcarbamoyl group on adenosine at position 37 (t(6)A37) in tRNAs that read codons beginning with adenine. Catalyzes the conversion of L-threonine, HCO(3)(-)/CO(2) and ATP to give threonylcarbamoyl-AMP (TC-AMP) as the acyladenylate intermediate, with the release of diphosphate. The protein is Threonylcarbamoyl-AMP synthase of Sodalis glossinidius (strain morsitans).